The following is a 440-amino-acid chain: Protein naked cuticle homolog 1 (440 aa).

G2 is lipidated: N-myristoyl glycine. The EF-hand domain maps to 129–164; that stretch reads EEDNRQEWTFTLYDFDNNGKVTREDITSLLHTIYEV. The Ca(2+) site is built by D142, D144, N146, K148, and D153. The span at 192–204 shows a compositional bias: polar residues; that stretch reads RWKNCTQTNTDTP. 3 disordered regions span residues 192-221, 272-379, and 421-440; these read RWKN…KTSE, AAPA…QRPK, and RHEH…FYQS. The span at 211–221 shows a compositional bias: basic and acidic residues; the sequence is EKCIEDSKTSE. Residues 272-293 are compositionally biased toward low complexity; it reads AAPATEPAKPTHATRSSNQSRS. Basic residues predominate over residues 324-336; sequence RHTHALRSPKTHR. A compositionally biased stretch (pro residues) spans 352 to 362; it reads APPPPSVPNQT. Residues 422–440 show a composition bias toward basic residues; the sequence is HEHHHHHEHHHHYHHFYQS.

The protein belongs to the NKD family.

It is found in the cell membrane. The protein localises to the cytoplasm. Cell autonomous antagonist of the canonical Wnt signaling pathway. May activate a second Wnt signaling pathway that controls planar cell polarity. The sequence is that of Protein naked cuticle homolog 1 (nkd1) from Danio rerio (Zebrafish).